We begin with the raw amino-acid sequence, 290 residues long: Glycine--tRNA ligase alpha subunit (290 aa).

The protein belongs to the class-II aminoacyl-tRNA synthetase family. Tetramer of two alpha and two beta subunits.

The protein localises to the cytoplasm. It carries out the reaction tRNA(Gly) + glycine + ATP = glycyl-tRNA(Gly) + AMP + diphosphate. The polypeptide is Glycine--tRNA ligase alpha subunit (Fusobacterium nucleatum subsp. nucleatum (strain ATCC 25586 / DSM 15643 / BCRC 10681 / CIP 101130 / JCM 8532 / KCTC 2640 / LMG 13131 / VPI 4355)).